The following is a 74-amino-acid chain: MSSKTLLVLLLVGVLVSTFFTADAYPASMDNYDDALEELDNLDLDDYFDLEPADFVLLDMWANMLESSDFDDME.

The first 24 residues, 1-24, serve as a signal peptide directing secretion; sequence MSSKTLLVLLLVGVLVSTFFTADA.

The protein belongs to the non-disulfide-bridged peptide (NDBP) superfamily. Long chain multifunctional peptide (group 2) family. In terms of tissue distribution, expressed by the venom gland.

It is found in the secreted. Functionally, highly acidic peptide that may have antibacterial activity. This is Peptide BmKa2 from Olivierus martensii (Manchurian scorpion).